The sequence spans 519 residues: Tetratricopeptide repeat protein 31 (519 aa).

Residues 147–197 (QKLLVTEEEANRLAEELVAEEERMKQKAEKKRLKKKRQKERKRQERLEQYC) are a coiled coil. Residues 175 to 187 (EKKRLKKKRQKER) are compositionally biased toward basic residues. Disordered regions lie at residues 175-230 (EKKR…EEDS) and 253-294 (RREK…VQAS). S278 carries the post-translational modification Phosphoserine. TPR repeat units lie at residues 305 to 338 (SQEL…NPQD), 339 to 372 (HRLF…RPGW), and 373 to 406 (PRGL…GSQP). The disordered stretch occupies residues 474–506 (PSCHRSHPNQPLSQTQSRRPHPLKPQDPSKGWD). Residues 481-490 (PNQPLSQTQS) show a composition bias toward polar residues.

The polypeptide is Tetratricopeptide repeat protein 31 (TTC31) (Homo sapiens (Human)).